A 169-amino-acid chain; its full sequence is Peptide deformylase (169 aa).

Fe cation contacts are provided by Cys-92 and His-134. The active site involves Glu-135. His-138 is a Fe cation binding site.

Belongs to the polypeptide deformylase family. The cofactor is Fe(2+).

The catalysed reaction is N-terminal N-formyl-L-methionyl-[peptide] + H2O = N-terminal L-methionyl-[peptide] + formate. Its function is as follows. Removes the formyl group from the N-terminal Met of newly synthesized proteins. Requires at least a dipeptide for an efficient rate of reaction. N-terminal L-methionine is a prerequisite for activity but the enzyme has broad specificity at other positions. This Cellvibrio japonicus (strain Ueda107) (Pseudomonas fluorescens subsp. cellulosa) protein is Peptide deformylase.